The chain runs to 147 residues: Hemoglobin subunit epsilon (147 aa).

A Globin domain is found at 3-147 (HFTAEEKAAI…VAIALGHKYH (145 aa)). A phosphoserine mark is found at serine 14 and serine 51. Residues histidine 64 and histidine 93 each coordinate heme b.

Belongs to the globin family. As to quaternary structure, heterotetramer of two alpha chains and two epsilon chains in early embryonic hemoglobin Gower-2; two zeta chains and two epsilon chains in early embryonic hemoglobin Gower-1. In terms of tissue distribution, red blood cells.

Functionally, the epsilon chain is a beta-type chain of early mammalian embryonic hemoglobin. The protein is Hemoglobin subunit epsilon (HBE1) of Lagothrix lagotricha (Brown woolly monkey).